Reading from the N-terminus, the 180-residue chain is Ribosome maturation factor RimM (180 aa).

The region spanning P97 to L169 is the PRC barrel domain.

This sequence belongs to the RimM family. Binds ribosomal protein uS19.

It localises to the cytoplasm. An accessory protein needed during the final step in the assembly of 30S ribosomal subunit, possibly for assembly of the head region. Essential for efficient processing of 16S rRNA. May be needed both before and after RbfA during the maturation of 16S rRNA. It has affinity for free ribosomal 30S subunits but not for 70S ribosomes. In Bacteroides fragilis (strain YCH46), this protein is Ribosome maturation factor RimM.